Consider the following 438-residue polypeptide: Fibrous sheath-interacting protein 1 (438 aa).

The disordered stretch occupies residues 1–111 (MSMDIIKGNL…PEHSDDPKLE (111 aa)). The span at 18–32 (SSSRSRPGSRSSNGS) shows a compositional bias: low complexity. Basic and acidic residues predominate over residues 53 to 72 (SGKEGHTSDSRVEERRKISD). S71, S88, and S89 each carry phosphoserine. Residues 131-157 (LAKRRIREKEIKKQGLEMRIKLWEELK) are a coiled coil. The interval 354-390 (SQSNKGDMEHDSNEERNTEPTPGEKILRDNKEQRDRE) is disordered. 2 stretches are compositionally biased toward basic and acidic residues: residues 359 to 371 (GDME…ERNT) and 378 to 390 (KILR…RDRE).

The protein belongs to the FSIP1 family.

This is Fibrous sheath-interacting protein 1 (Fsip1) from Rattus norvegicus (Rat).